Reading from the N-terminus, the 342-residue chain is Glycerol-3-phosphate dehydrogenase [NAD(P)+] (342 aa).

Residues tryptophan 11, arginine 33, and lysine 107 each coordinate NADPH. Positions 107, 143, and 145 each coordinate sn-glycerol 3-phosphate. An NADPH-binding site is contributed by alanine 147. 5 residues coordinate sn-glycerol 3-phosphate: lysine 198, aspartate 251, serine 261, arginine 262, and asparagine 263. The active-site Proton acceptor is lysine 198. Residue arginine 262 participates in NADPH binding. Valine 286 and glutamate 288 together coordinate NADPH.

It belongs to the NAD-dependent glycerol-3-phosphate dehydrogenase family.

It is found in the cytoplasm. It catalyses the reaction sn-glycerol 3-phosphate + NAD(+) = dihydroxyacetone phosphate + NADH + H(+). The catalysed reaction is sn-glycerol 3-phosphate + NADP(+) = dihydroxyacetone phosphate + NADPH + H(+). Its pathway is membrane lipid metabolism; glycerophospholipid metabolism. Its function is as follows. Catalyzes the reduction of the glycolytic intermediate dihydroxyacetone phosphate (DHAP) to sn-glycerol 3-phosphate (G3P), the key precursor for phospholipid synthesis. The polypeptide is Glycerol-3-phosphate dehydrogenase [NAD(P)+] (Paracidovorax citrulli (strain AAC00-1) (Acidovorax citrulli)).